Here is a 467-residue protein sequence, read N- to C-terminus: Asparagine--tRNA ligase (467 aa).

Belongs to the class-II aminoacyl-tRNA synthetase family. As to quaternary structure, homodimer.

The protein resides in the cytoplasm. The catalysed reaction is tRNA(Asn) + L-asparagine + ATP = L-asparaginyl-tRNA(Asn) + AMP + diphosphate + H(+). The sequence is that of Asparagine--tRNA ligase from Actinobacillus pleuropneumoniae serotype 3 (strain JL03).